The following is an 84-amino-acid chain: NADH dehydrogenase [ubiquinone] 1 alpha subcomplex subunit 3 (84 aa).

A2 carries the post-translational modification N-acetylalanine. A helical transmembrane segment spans residues 19 to 39 (LVVSFSVWGLAIIMPMISPYT). The interval 59–84 (DDGNMPDVPSHPQDPLGPSLDWLKNL) is disordered.

It belongs to the complex I NDUFA3 subunit family. Complex I is composed of 45 different subunits.

The protein resides in the mitochondrion inner membrane. Its function is as follows. Accessory subunit of the mitochondrial membrane respiratory chain NADH dehydrogenase (Complex I), that is believed not to be involved in catalysis. Complex I functions in the transfer of electrons from NADH to the respiratory chain. The immediate electron acceptor for the enzyme is believed to be ubiquinone. The protein is NADH dehydrogenase [ubiquinone] 1 alpha subcomplex subunit 3 (Ndufa3) of Mus musculus (Mouse).